A 427-amino-acid polypeptide reads, in one-letter code: ATP-sensitive inward rectifier potassium channel 12 (427 aa).

Over 1-77 (MTAASRANPY…LADMFTTCVD (77 aa)) the chain is Cytoplasmic. An S-nitrosocysteine modification is found at C75. The helical transmembrane segment at 78-104 (IRWRYMLLIFSLAFLASWLLFGIIFWV) threads the bilayer. A 1,2-diacyl-sn-glycero-3-phospho-(1D-myo-inositol-4,5-bisphosphate)-binding residues include R79 and R81. At 105 to 129 (IAVAHGDLEPAEGRGRTPCVLQVHG) the chain is on the extracellular side. An intrachain disulfide couples C123 to C155. An intramembrane region (helical; Pore-forming) is located at residues 130–146 (FMAAFLFSIETQTTIGY). The K(+) site is built by T143, I144, G145, and Y146. Positions 143–148 (TIGYGL) match the Selectivity filter motif. Residues 147-155 (GLRCVTEEC) lie on the Extracellular side of the membrane. Residues 156-183 (PVAVFMVVAQSIVGCIIDSFMIGAIMAK) traverse the membrane as a helical segment. 2 residues coordinate a 1,2-diacyl-sn-glycero-3-phospho-(1D-myo-inositol-4,5-bisphosphate): K183 and K188. Residues 184–427 (MARPKKRAQT…ERPYRRESEI (244 aa)) lie on the Cytoplasmic side of the membrane. Residues 387-427 (DEEDEVATDRDGRSPQPEHDFDRLQASSAALERPYRRESEI) form a disordered region. Residues 393 to 409 (ATDRDGRSPQPEHDFDR) show a composition bias toward basic and acidic residues. A PDZ-binding motif is present at residues 425-427 (SEI).

The protein belongs to the inward rectifier-type potassium channel (TC 1.A.2.1) family. KCNJ12 subfamily. As to quaternary structure, homotetramer. Forms heteromer with KCNJ4. Can form heteromeric channels with Kir2.6/KCNJ18. Association, via its PDZ-recognition domain, with LIN7A, LIN7B, LIN7C, DLG1, CASK and APBA1 plays a key role in its localization and trafficking. Highest level in cerebellum.

It localises to the membrane. Its subcellular location is the cell membrane. It is found in the sarcolemma. The protein localises to the T-tubule. The enzyme catalyses K(+)(in) = K(+)(out). Activated by phosphatidylinositol 4,5-biphosphate (PtdIns(4,5)P2). PtdIns(4,5)P2 binding to the cytoplasmic side of the channel triggers a conformation change leading to channel opening. Inhibited by Ba(2+). In terms of biological role, inward rectifying potassium channel that probably participates in controlling the resting membrane potential in electrically excitable cells. It probably participates in establishing action potential waveform and excitability of neuronal and muscle tissues. Inward rectifier potassium channels are characterized by a greater tendency to allow potassium to flow into the cell rather than out of it. Their voltage dependence is regulated by the concentration of extracellular potassium; as external potassium is raised, the voltage range of the channel opening shifts to more positive voltages. The inward rectification is mainly due to the blockage of outward current by internal magnesium. The chain is ATP-sensitive inward rectifier potassium channel 12 (Kcnj12) from Mus musculus (Mouse).